Reading from the N-terminus, the 236-residue chain is Phosphatidylserine decarboxylase proenzyme (236 aa).

Catalysis depends on serine 194, which acts as the Schiff-base intermediate with substrate; via pyruvic acid. Pyruvic acid (Ser); by autocatalysis is present on serine 194.

It belongs to the phosphatidylserine decarboxylase family. PSD-A subfamily. As to quaternary structure, heterodimer of a large membrane-associated beta subunit and a small pyruvoyl-containing alpha subunit. Pyruvate serves as cofactor. Is synthesized initially as an inactive proenzyme. Formation of the active enzyme involves a self-maturation process in which the active site pyruvoyl group is generated from an internal serine residue via an autocatalytic post-translational modification. Two non-identical subunits are generated from the proenzyme in this reaction, and the pyruvate is formed at the N-terminus of the alpha chain, which is derived from the carboxyl end of the proenzyme. The post-translation cleavage follows an unusual pathway, termed non-hydrolytic serinolysis, in which the side chain hydroxyl group of the serine supplies its oxygen atom to form the C-terminus of the beta chain, while the remainder of the serine residue undergoes an oxidative deamination to produce ammonia and the pyruvoyl prosthetic group on the alpha chain.

Its subcellular location is the cell membrane. It catalyses the reaction a 1,2-diacyl-sn-glycero-3-phospho-L-serine + H(+) = a 1,2-diacyl-sn-glycero-3-phosphoethanolamine + CO2. Its pathway is phospholipid metabolism; phosphatidylethanolamine biosynthesis; phosphatidylethanolamine from CDP-diacylglycerol: step 2/2. Functionally, catalyzes the formation of phosphatidylethanolamine (PtdEtn) from phosphatidylserine (PtdSer). This Rhodospirillum rubrum (strain ATCC 11170 / ATH 1.1.1 / DSM 467 / LMG 4362 / NCIMB 8255 / S1) protein is Phosphatidylserine decarboxylase proenzyme.